The chain runs to 533 residues: NADH-quinone oxidoreductase subunit N (533 aa).

A run of 14 helical transmembrane segments spans residues 13-33 (VWPL…EGFV), 40-60 (LVQA…TILV), 87-107 (PALF…LLFA), 141-161 (HTEV…FAAA), 164-184 (LLTL…LSGL), 200-220 (FMLG…VYGF), 243-263 (LLIG…AVPF), 275-295 (PTAV…GAML), 310-330 (QPML…IAIV), 337-357 (MLAY…LGVQ), 373-393 (VLFY…VVTL), 417-437 (VAGV…TAGF), 451-471 (GAWP…FFYV), and 502-522 (ATIF…GPVL).

This sequence belongs to the complex I subunit 2 family. In terms of assembly, NDH-1 is composed of 14 different subunits. Subunits NuoA, H, J, K, L, M, N constitute the membrane sector of the complex.

It is found in the cell membrane. It catalyses the reaction a quinone + NADH + 5 H(+)(in) = a quinol + NAD(+) + 4 H(+)(out). NDH-1 shuttles electrons from NADH, via FMN and iron-sulfur (Fe-S) centers, to quinones in the respiratory chain. The immediate electron acceptor for the enzyme in this species is believed to be a menaquinone. Couples the redox reaction to proton translocation (for every two electrons transferred, four hydrogen ions are translocated across the cytoplasmic membrane), and thus conserves the redox energy in a proton gradient. The protein is NADH-quinone oxidoreductase subunit N of Nocardioides sp. (strain ATCC BAA-499 / JS614).